Consider the following 475-residue polypeptide: uncharacterized protein (475 aa).

The stretch at E185 to I244 forms a coiled coil.

This is an uncharacterized protein from Nora virus.